A 372-amino-acid chain; its full sequence is Queuine tRNA-ribosyltransferase (372 aa).

Asp92 serves as the catalytic Proton acceptor. Substrate is bound by residues 92 to 96 (DSGGF), Asp146, Gln188, and Gly215. The tract at residues 246–252 (GIGTLRE) is RNA binding. The Nucleophile role is filled by Asp265. The segment at 270-274 (TRLGR) is RNA binding; important for wobble base 34 recognition. The Zn(2+) site is built by Cys303, Cys305, Cys308, and His334.

The protein belongs to the queuine tRNA-ribosyltransferase family. In terms of assembly, homodimer. Within each dimer, one monomer is responsible for RNA recognition and catalysis, while the other monomer binds to the replacement base PreQ1. It depends on Zn(2+) as a cofactor.

It catalyses the reaction 7-aminomethyl-7-carbaguanine + guanosine(34) in tRNA = 7-aminomethyl-7-carbaguanosine(34) in tRNA + guanine. It functions in the pathway tRNA modification; tRNA-queuosine biosynthesis. Functionally, catalyzes the base-exchange of a guanine (G) residue with the queuine precursor 7-aminomethyl-7-deazaguanine (PreQ1) at position 34 (anticodon wobble position) in tRNAs with GU(N) anticodons (tRNA-Asp, -Asn, -His and -Tyr). Catalysis occurs through a double-displacement mechanism. The nucleophile active site attacks the C1' of nucleotide 34 to detach the guanine base from the RNA, forming a covalent enzyme-RNA intermediate. The proton acceptor active site deprotonates the incoming PreQ1, allowing a nucleophilic attack on the C1' of the ribose to form the product. After dissociation, two additional enzymatic reactions on the tRNA convert PreQ1 to queuine (Q), resulting in the hypermodified nucleoside queuosine (7-(((4,5-cis-dihydroxy-2-cyclopenten-1-yl)amino)methyl)-7-deazaguanosine). This chain is Queuine tRNA-ribosyltransferase, found in Prochlorococcus marinus (strain MIT 9313).